Consider the following 246-residue polypeptide: Triosephosphate isomerase (246 aa).

9–11 (NWK) lines the substrate pocket. His-91 serves as the catalytic Electrophile. The active-site Proton acceptor is the Glu-161. Substrate-binding positions include Gly-167, Ser-206, and 227 to 228 (GG).

It belongs to the triosephosphate isomerase family. As to quaternary structure, homodimer.

Its subcellular location is the cytoplasm. The enzyme catalyses D-glyceraldehyde 3-phosphate = dihydroxyacetone phosphate. Its pathway is carbohydrate biosynthesis; gluconeogenesis. It functions in the pathway carbohydrate degradation; glycolysis; D-glyceraldehyde 3-phosphate from glycerone phosphate: step 1/1. Its function is as follows. Involved in the gluconeogenesis. Catalyzes stereospecifically the conversion of dihydroxyacetone phosphate (DHAP) to D-glyceraldehyde-3-phosphate (G3P). This Ruegeria sp. (strain TM1040) (Silicibacter sp.) protein is Triosephosphate isomerase.